The chain runs to 189 residues: NADH-quinone oxidoreductase subunit B (189 aa).

Residues cysteine 39, cysteine 40, cysteine 104, and cysteine 135 each coordinate [4Fe-4S] cluster.

This sequence belongs to the complex I 20 kDa subunit family. NDH-1 is composed of 14 different subunits. Subunits NuoB, C, D, E, F, and G constitute the peripheral sector of the complex. [4Fe-4S] cluster is required as a cofactor.

It is found in the cell inner membrane. The catalysed reaction is a quinone + NADH + 5 H(+)(in) = a quinol + NAD(+) + 4 H(+)(out). NDH-1 shuttles electrons from NADH, via FMN and iron-sulfur (Fe-S) centers, to quinones in the respiratory chain. The immediate electron acceptor for the enzyme in this species is believed to be a menaquinone. Couples the redox reaction to proton translocation (for every two electrons transferred, four hydrogen ions are translocated across the cytoplasmic membrane), and thus conserves the redox energy in a proton gradient. The protein is NADH-quinone oxidoreductase subunit B of Pelodictyon phaeoclathratiforme (strain DSM 5477 / BU-1).